A 485-amino-acid chain; its full sequence is Glutamyl-tRNA(Gln) amidotransferase subunit A (485 aa).

Active-site charge relay system residues include K79 and S154. S178 serves as the catalytic Acyl-ester intermediate.

This sequence belongs to the amidase family. GatA subfamily. In terms of assembly, heterotrimer of A, B and C subunits.

It catalyses the reaction L-glutamyl-tRNA(Gln) + L-glutamine + ATP + H2O = L-glutaminyl-tRNA(Gln) + L-glutamate + ADP + phosphate + H(+). Its function is as follows. Allows the formation of correctly charged Gln-tRNA(Gln) through the transamidation of misacylated Glu-tRNA(Gln) in organisms which lack glutaminyl-tRNA synthetase. The reaction takes place in the presence of glutamine and ATP through an activated gamma-phospho-Glu-tRNA(Gln). The sequence is that of Glutamyl-tRNA(Gln) amidotransferase subunit A from Clostridium botulinum (strain Alaska E43 / Type E3).